The sequence spans 273 residues: 2-dehydro-3-deoxyphosphooctonate aldolase (273 aa).

It belongs to the KdsA family.

The protein localises to the cytoplasm. The catalysed reaction is D-arabinose 5-phosphate + phosphoenolpyruvate + H2O = 3-deoxy-alpha-D-manno-2-octulosonate-8-phosphate + phosphate. Its pathway is carbohydrate biosynthesis; 3-deoxy-D-manno-octulosonate biosynthesis; 3-deoxy-D-manno-octulosonate from D-ribulose 5-phosphate: step 2/3. It functions in the pathway bacterial outer membrane biogenesis; lipopolysaccharide biosynthesis. The chain is 2-dehydro-3-deoxyphosphooctonate aldolase from Nitratidesulfovibrio vulgaris (strain DP4) (Desulfovibrio vulgaris).